Consider the following 252-residue polypeptide: tRNA pseudouridine synthase A (252 aa).

The Nucleophile role is filled by D54. Y113 lines the substrate pocket.

The protein belongs to the tRNA pseudouridine synthase TruA family. As to quaternary structure, homodimer.

The enzyme catalyses uridine(38/39/40) in tRNA = pseudouridine(38/39/40) in tRNA. Formation of pseudouridine at positions 38, 39 and 40 in the anticodon stem and loop of transfer RNAs. The chain is tRNA pseudouridine synthase A from Bacteroides fragilis (strain ATCC 25285 / DSM 2151 / CCUG 4856 / JCM 11019 / LMG 10263 / NCTC 9343 / Onslow / VPI 2553 / EN-2).